The chain runs to 193 residues: Non-specific lipid transfer protein GPI-anchored 2 (193 aa).

The signal sequence occupies residues 1–22 (MSNVVVIAVVLIVASLTGHVSA). Cystine bridges form between cysteine 38–cysteine 83, cysteine 48–cysteine 67, cysteine 68–cysteine 110, and cysteine 81–cysteine 120. Residue asparagine 44 is glycosylated (N-linked (GlcNAc...) asparagine). The segment at 143-164 (APGSMSGAESPGGFGSGPSASR) is disordered. Residue glycine 165 is the site of GPI-anchor amidated glycine attachment. A propeptide spans 166–193 (SDAPSSAPYSLFLNLIIFPLAFAFYIFC) (removed in mature form).

This sequence belongs to the plant LTP family. O-glycosylated on hydroxyprolines; noncontiguous hydroxylproline residues are glycosylated with arabinogalactan. In terms of tissue distribution, up-regulated in the epidermis of top stems. Expressed in roots, cotyledons, seedlings, leaves, stems, buds, flower and silique walls. Preferentially expressed in the shoot apical meristem and the root meristem. Also detected in expanding leaves and petals, developing flowers, and elongating pistils, stamens and siliques.

The protein resides in the cell membrane. Its function is as follows. Lipid transfer protein that, together with LTPG1, binds to lipids and functions as a component of the cuticular lipid export machinery that performs extensive export of intracellular lipids (e.g. C29 alkane) from epidermal cells to the surface to build the cuticular wax layer and silique walls. Contributes to pre-invasive defense against some non-host powdery mildew pathogens by preventing the penetration of the epidermal cell wall by the fungal agents (e.g. Blumeria graminis f. sp. hordei (Bgh)). Involved in seed and ovule maturation and development, probably by regulating the fatty acids homeostasis during suberin and sporopollenin biosynthesis or deposition. The sequence is that of Non-specific lipid transfer protein GPI-anchored 2 from Arabidopsis thaliana (Mouse-ear cress).